Here is a 210-residue protein sequence, read N- to C-terminus: Mating-type-like protein ALPHA2, silenced copy at MTL3 (210 aa).

Residues 108–170 (ASYRGHRFTR…NRRRKQKSIY (63 aa)) constitute a DNA-binding region (homeobox; TALE-type).

This sequence belongs to the TALE/M-ATYP homeobox family.

The protein localises to the nucleus. Its function is as follows. Mating type proteins are sequence specific DNA-binding proteins that act as master switches in yeast differentiation by controlling gene expression in a cell type-specific fashion. The chain is Mating-type-like protein ALPHA2, silenced copy at MTL3 (MTL3alpha2) from Candida glabrata (strain ATCC 2001 / BCRC 20586 / JCM 3761 / NBRC 0622 / NRRL Y-65 / CBS 138) (Yeast).